Reading from the N-terminus, the 473-residue chain is Suppressor of SWI4 1 homolog (473 aa).

Residues Pro29–Glu292 form the Brix domain. Phosphoserine is present on residues Ser238 and Ser240. Residues Ala323–Ala473 are disordered. Over residues Gln324–Gln334 the composition is skewed to low complexity. Over residues Arg335 to Lys352 the composition is skewed to basic and acidic residues. The residue at position 359 (Ser359) is a Phosphoserine. Positions Leu375–Glu388 are enriched in acidic residues. Residues Lys409 to Arg421 are compositionally biased toward basic residues. Over residues Trp422–Ser443 the composition is skewed to basic and acidic residues. Residue Lys438 is modified to N6-acetyllysine. Over residues Gly462 to Ala473 the composition is skewed to basic residues.

In terms of tissue distribution, widely expressed.

Its subcellular location is the nucleus. It is found in the nucleolus. In terms of biological role, may have a role in cell growth. The chain is Suppressor of SWI4 1 homolog (PPAN) from Homo sapiens (Human).